Here is a 628-residue protein sequence, read N- to C-terminus: tRNA uridine 5-carboxymethylaminomethyl modification enzyme MnmG 1 (628 aa).

11 to 16 is an FAD binding site; that stretch reads GAGHAG. 280–294 provides a ligand contact to NAD(+); the sequence is GPRHCPSIDRKVLNF.

The protein belongs to the MnmG family. Homodimer. Heterotetramer of two MnmE and two MnmG subunits. The cofactor is FAD.

The protein localises to the cytoplasm. Its function is as follows. NAD-binding protein involved in the addition of a carboxymethylaminomethyl (cmnm) group at the wobble position (U34) of certain tRNAs, forming tRNA-cmnm(5)s(2)U34. This chain is tRNA uridine 5-carboxymethylaminomethyl modification enzyme MnmG 1, found in Fusobacterium nucleatum subsp. nucleatum (strain ATCC 25586 / DSM 15643 / BCRC 10681 / CIP 101130 / JCM 8532 / KCTC 2640 / LMG 13131 / VPI 4355).